The chain runs to 508 residues: Erythropoietin receptor (508 aa).

Positions 1-24 are cleaved as a signal peptide; that stretch reads MNHLWTHLWPGVGSLCLLLAGAAW. Residues 25-250 are Extracellular-facing; it reads ASLPKPLDPK…SLLTASDLDP (226 aa). Cysteines 52 and 62 form a disulfide. A glycan (N-linked (GlcNAc...) asparagine) is linked at N76. C91 and C107 are disulfide-bonded. Residues 148-247 form the Fibronectin type-III domain; sequence PPAGLLARRA…EPASLLTASD (100 aa). N184 carries an N-linked (GlcNAc...) asparagine glycan. The WSXWS motif motif lies at 233 to 237; it reads WSAWS. Residues 251–273 traverse the membrane as a helical segment; the sequence is LILTLSLILVLILLLLAVLALLS. Topologically, residues 274 to 508 are cytoplasmic; it reads HRRTLKQKIW…PSPPGYVACS (235 aa). Residue K281 forms a Glycyl lysine isopeptide (Lys-Gly) (interchain with G-Cter in ubiquitin) linkage. The Box 1 motif signature appears at 282–290; it reads IWPGIPSPE. Y368 and Y426 each carry phosphotyrosine; by JAK2. The ITIM motif motif lies at 452-457; sequence IKYLYL. K453 is covalently cross-linked (Glycyl lysine isopeptide (Lys-Gly) (interchain with G-Cter in ubiquitin)). A phosphotyrosine; by JAK2 mark is found at Y454, Y456, Y468, Y489, and Y504. Positions 467-508 are disordered; that stretch reads DYSSGGSQGAQGDSLNSPFLNPYENSLIPAPEPSPPGYVACS.

The protein belongs to the type I cytokine receptor family. Type 1 subfamily. Forms homodimers on EPO stimulation. The tyrosine-phosphorylated form interacts with several SH2 domain-containing proteins including LYN, the adapter protein SH2B2, PTPN6, PTPN11, JAK2, PI3 kinases, STAT5A/B, SOCS3, CRKL. Interacts with INPP5D/SHIP1. SH2B2 binding inhibits the JAK-STAT signaling. Interacts with RHEX; this interaction occurs in a erythropoietin (EPO)-dependent manner. Interacts with ATXN2L. Post-translationally, on EPO stimulation, phosphorylated on C-terminal tyrosine residues by JAK2. The phosphotyrosine motifs are also recruitment sites for several SH2-containing proteins and adapter proteins which mediate cell proliferation. Phosphorylation on Tyr-454 is required for PTPN6 interaction, Tyr-426 for PTPN11. Tyr-426 is also required for SOCS3 binding, but Tyr-454/Tyr-456 motif is the preferred binding site. In terms of processing, ubiquitinated by the ECS(SOCS2) complex following ligand-binding and phosphorylation by JAK2, leading to its degradation by the proteasome. Regulation by the ECS(SOCS2) complex acts as a negative feedback loop of erythropoietin-mediated signaling pathway. Ubiquitination at Lys-281 mediates receptor internalization, whereas ubiquitination at Lys-453 promotes trafficking of activated receptors to the lysosomes for degradation. Ubiquitinated by NOSIP; appears to be either multi-monoubiquitinated or polyubiquitinated. Ubiquitination mediates proliferation and survival of EPO-dependent cells.

The protein localises to the cell membrane. Functionally, receptor for erythropoietin, which mediates erythropoietin-induced erythroblast proliferation and differentiation. Upon EPO stimulation, EPOR dimerizes triggering the JAK2/STAT5 signaling cascade. In some cell types, can also activate STAT1 and STAT3. May also activate the LYN tyrosine kinase. In terms of biological role, isoform EPOR-T acts as a dominant-negative receptor of EPOR-mediated signaling. The chain is Erythropoietin receptor (EPOR) from Canis lupus familiaris (Dog).